The primary structure comprises 274 residues: Dermonecrotic toxin LarSicTox-alphaIB2bii (274 aa).

Residue H3 is part of the active site. Mg(2+) contacts are provided by E23 and D25. H39 acts as the Nucleophile in catalysis. Cystine bridges form between C43-C49 and C45-C188. Residue D83 participates in Mg(2+) binding. An N-linked (GlcNAc...) asparagine glycan is attached at N251.

The protein belongs to the arthropod phospholipase D family. Class II subfamily. Mg(2+) serves as cofactor. Expressed by the venom gland.

It is found in the secreted. It catalyses the reaction an N-(acyl)-sphingosylphosphocholine = an N-(acyl)-sphingosyl-1,3-cyclic phosphate + choline. It carries out the reaction an N-(acyl)-sphingosylphosphoethanolamine = an N-(acyl)-sphingosyl-1,3-cyclic phosphate + ethanolamine. The catalysed reaction is a 1-acyl-sn-glycero-3-phosphocholine = a 1-acyl-sn-glycero-2,3-cyclic phosphate + choline. The enzyme catalyses a 1-acyl-sn-glycero-3-phosphoethanolamine = a 1-acyl-sn-glycero-2,3-cyclic phosphate + ethanolamine. Dermonecrotic toxins cleave the phosphodiester linkage between the phosphate and headgroup of certain phospholipids (sphingolipid and lysolipid substrates), forming an alcohol (often choline) and a cyclic phosphate. This toxin acts on sphingomyelin (SM). It may also act on ceramide phosphoethanolamine (CPE), lysophosphatidylcholine (LPC) and lysophosphatidylethanolamine (LPE), but not on lysophosphatidylserine (LPS), and lysophosphatidylglycerol (LPG). It acts by transphosphatidylation, releasing exclusively cyclic phosphate products as second products. Induces dermonecrosis, hemolysis, increased vascular permeability, edema, inflammatory response, and platelet aggregation. The polypeptide is Dermonecrotic toxin LarSicTox-alphaIB2bii (Loxosceles arizonica (Arizona brown spider)).